The primary structure comprises 539 residues: CTP synthase (539 aa).

Residues 1 to 269 (MSATKYIFVT…DERVLSKLKL (269 aa)) are amidoligase domain. S15 is a CTP binding site. S15 is a UTP binding site. Residue 16–21 (SLGKGI) participates in ATP binding. Residue Y56 participates in L-glutamine binding. D73 provides a ligand contact to ATP. Residues D73 and E143 each coordinate Mg(2+). CTP-binding positions include 150 to 152 (DIE), 190 to 195 (KTKPTQ), and K226. UTP is bound by residues 190–195 (KTKPTQ) and K226. A Glutamine amidotransferase type-1 domain is found at 295–537 (NIALVGKYVE…VKAANDFAKG (243 aa)). Position 357 (G357) interacts with L-glutamine. The active-site Nucleophile; for glutamine hydrolysis is C384. L-glutamine contacts are provided by residues 385-388 (LGMQ), E408, and R465. Active-site residues include H510 and E512.

The protein belongs to the CTP synthase family. In terms of assembly, homotetramer.

The catalysed reaction is UTP + L-glutamine + ATP + H2O = CTP + L-glutamate + ADP + phosphate + 2 H(+). It carries out the reaction L-glutamine + H2O = L-glutamate + NH4(+). It catalyses the reaction UTP + NH4(+) + ATP = CTP + ADP + phosphate + 2 H(+). Its pathway is pyrimidine metabolism; CTP biosynthesis via de novo pathway; CTP from UDP: step 2/2. Its activity is regulated as follows. Allosterically activated by GTP, when glutamine is the substrate; GTP has no effect on the reaction when ammonia is the substrate. The allosteric effector GTP functions by stabilizing the protein conformation that binds the tetrahedral intermediate(s) formed during glutamine hydrolysis. Inhibited by the product CTP, via allosteric rather than competitive inhibition. In terms of biological role, catalyzes the ATP-dependent amination of UTP to CTP with either L-glutamine or ammonia as the source of nitrogen. Regulates intracellular CTP levels through interactions with the four ribonucleotide triphosphates. In Cytophaga hutchinsonii (strain ATCC 33406 / DSM 1761 / CIP 103989 / NBRC 15051 / NCIMB 9469 / D465), this protein is CTP synthase.